The sequence spans 600 residues: Autophagy-related protein 22-2 (600 aa).

The tract at residues 1–30 (MAFASPPASPPDEDGQARAPRYPGEDTTPT) is disordered. 4 helical membrane passes run 41-61 (YGIAAEVFAVCGVGSFLPLTL), 117-137 (SFAMYTFSLAVLVQALTLISF), 149-168 (TLLVTFGFIGSATSMLFVFI), and 186-206 (CLGSSFVVLNSFLPVLVASDP). A disordered region spans residues 234–257 (SFDGDEPTHRPPTGLGLGGATGTS). A run of 4 helical transmembrane segments spans residues 271–291 (GVGLGYCAAVFVQILSILLLF), 304–324 (TLPLRFVLLLVGIWWFSFTMV), 378–398 (VIVFLVAWFLLSDAMATVSGT), and 414–434 (VALLSITATLSGMAGAFLWPI). Asn-444 carries N-linked (GlcNAc...) asparagine glycosylation. Helical transmembrane passes span 449–469 (VCIALFELIPLYGMLAYIPLF), 484–506 (YPLAIVHGVVSGGLSSYCRSFFG), 526–546 (KGSSFIGPAIVGVLIDATGQV), and 549–569 (GFFFIAVLIVLPIPLVWMVDA).

The protein belongs to the ATG22 family.

Its subcellular location is the vacuole membrane. Vacuolar effluxer which mediate the efflux of amino acids resulting from autophagic degradation. The release of autophagic amino acids allows the maintenance of protein synthesis and viability during nitrogen starvation. This chain is Autophagy-related protein 22-2 (atg22-2), found in Aspergillus niger (strain ATCC MYA-4892 / CBS 513.88 / FGSC A1513).